Here is a 121-residue protein sequence, read N- to C-terminus: Small ribosomal subunit protein uS13 (121 aa).

A disordered region spans residues arginine 99–lysine 121. Over residues glutamine 101–lysine 121 the composition is skewed to basic residues.

It belongs to the universal ribosomal protein uS13 family. As to quaternary structure, part of the 30S ribosomal subunit. Forms a loose heterodimer with protein S19. Forms two bridges to the 50S subunit in the 70S ribosome.

In terms of biological role, located at the top of the head of the 30S subunit, it contacts several helices of the 16S rRNA. In the 70S ribosome it contacts the 23S rRNA (bridge B1a) and protein L5 of the 50S subunit (bridge B1b), connecting the 2 subunits; these bridges are implicated in subunit movement. Contacts the tRNAs in the A and P-sites. The protein is Small ribosomal subunit protein uS13 of Thermodesulfovibrio yellowstonii (strain ATCC 51303 / DSM 11347 / YP87).